Consider the following 61-residue polypeptide: L-amino-acid oxidase (61 aa).

FAD is bound at residue M43–A44.

This sequence belongs to the flavin monoamine oxidase family. FIG1 subfamily. Homodimer; non-covalently linked. FAD is required as a cofactor. Post-translationally, N-glycosylated. As to expression, expressed by the venom gland.

It is found in the secreted. The enzyme catalyses an L-alpha-amino acid + O2 + H2O = a 2-oxocarboxylate + H2O2 + NH4(+). The catalysed reaction is L-leucine + O2 + H2O = 4-methyl-2-oxopentanoate + H2O2 + NH4(+). Its function is as follows. Catalyzes an oxidative deamination of predominantly hydrophobic and aromatic L-amino acids, thus producing hydrogen peroxide that may contribute to the diverse toxic effects of this enzyme. Shows activity on L-Leu. Exhibits diverse biological activities, such as apoptosis, antibacterial activities against both Gram-negative and Gram-positive bacteria and antiparasitic activities, as well as induction of platelet aggregation. Effects of snake L-amino oxidases on platelets are controversial, since they either induce aggregation or inhibit agonist-induced aggregation. These different effects are probably due to different experimental conditions. This protein may also induce hemorrhage, hemolysis, and edema. The sequence is that of L-amino-acid oxidase from Crotalus durissus cascavella (Northeastern Brazilian rattlesnake).